The chain runs to 264 residues: 3-methyl-2-oxobutanoate hydroxymethyltransferase (264 aa).

Positions 45 and 84 each coordinate Mg(2+). 3-methyl-2-oxobutanoate-binding positions include 45–46, aspartate 84, and lysine 112; that span reads DS. A Mg(2+)-binding site is contributed by glutamate 114. Glutamate 181 (proton acceptor) is an active-site residue.

This sequence belongs to the PanB family. In terms of assembly, homodecamer; pentamer of dimers. Requires Mg(2+) as cofactor.

The protein resides in the cytoplasm. It carries out the reaction 3-methyl-2-oxobutanoate + (6R)-5,10-methylene-5,6,7,8-tetrahydrofolate + H2O = 2-dehydropantoate + (6S)-5,6,7,8-tetrahydrofolate. Its pathway is cofactor biosynthesis; (R)-pantothenate biosynthesis; (R)-pantoate from 3-methyl-2-oxobutanoate: step 1/2. Catalyzes the reversible reaction in which hydroxymethyl group from 5,10-methylenetetrahydrofolate is transferred onto alpha-ketoisovalerate to form ketopantoate. The polypeptide is 3-methyl-2-oxobutanoate hydroxymethyltransferase (Edwardsiella ictaluri (strain 93-146)).